The primary structure comprises 311 residues: MKVAVLGAAGGIGQALALLLKTQLPAGSKLSLYDIAPVTPGVAVDLSHIPTAVEVKGFAGEDPTPALEGADVVLISAGVARKPGMDRSDLFNINAGIVRNLVEKCAATCPKALIGIITNPVNTTVAIAAEVLKAAGVYDKNRLFGVTTLDVIRSETFVAEAKGLNVADVKVNVIGGHSGVTILPLLSQIEGVSFSDEEVAALTTRIQNAGTEVVEAKAGGGSATLSMGQAACRFGLSLVRGLQGEANVVECAYVDGGSEHADFFAQPVLLGKNGIEQVLAYGEVSEFEANARDAMLDTLKADITLGVDFVK.

NAD(+)-binding positions include 7-13 (GAAGGIG) and D34. Positions 81 and 87 each coordinate substrate. NAD(+) is bound by residues N94 and 117 to 119 (ITN). The substrate site is built by N119 and R153. H177 functions as the Proton acceptor in the catalytic mechanism. M227 lines the NAD(+) pocket.

The protein belongs to the LDH/MDH superfamily. MDH type 1 family. As to quaternary structure, homodimer.

The enzyme catalyses (S)-malate + NAD(+) = oxaloacetate + NADH + H(+). Catalyzes the reversible oxidation of malate to oxaloacetate. The protein is Malate dehydrogenase of Shewanella loihica (strain ATCC BAA-1088 / PV-4).